Here is a 148-residue protein sequence, read N- to C-terminus: Ribonuclease H (148 aa).

The region spanning 3 to 144 is the RNase H type-1 domain; that stretch reads AEETVEIFTD…ADALANRGIE (142 aa). Positions 12, 50, 72, and 136 each coordinate Mg(2+). The segment at 129 to 148 is disordered; that stretch reads HPENERADALANRGIEELKG.

This sequence belongs to the RNase H family. Monomer. Requires Mg(2+) as cofactor.

The protein localises to the cytoplasm. It carries out the reaction Endonucleolytic cleavage to 5'-phosphomonoester.. Its function is as follows. Endonuclease that specifically degrades the RNA of RNA-DNA hybrids. The sequence is that of Ribonuclease H from Dechloromonas aromatica (strain RCB).